The sequence spans 113 residues: MAGHRKLGLPTDQRRAMLRNLVTSLLKHGKIETTETRAKETRSIAEKMITLGKRGDLHARRQVLSYVQEELVVKNLFDNVAPKYTERNGGYTRIIKKGPRRGDGAEIVILELV.

The protein belongs to the bacterial ribosomal protein bL17 family. Part of the 50S ribosomal subunit. Contacts protein L32.

This Clostridium beijerinckii (strain ATCC 51743 / NCIMB 8052) (Clostridium acetobutylicum) protein is Large ribosomal subunit protein bL17.